The sequence spans 550 residues: Tyrosine-protein phosphatase 1 (550 aa).

Residues 260–539 form the Tyrosine-protein phosphatase domain; sequence LYQKFLRLQS…KYVYDLIDSL (280 aa). Residues serine 318 and serine 320 each carry the phosphoserine modification. The active-site Phosphocysteine intermediate is cysteine 470.

It belongs to the protein-tyrosine phosphatase family. Non-receptor class subfamily.

The protein resides in the cytoplasm. It catalyses the reaction O-phospho-L-tyrosyl-[protein] + H2O = L-tyrosyl-[protein] + phosphate. In terms of biological role, plays a role in inhibiting the onset of mitosis. Dephosphorylates sty1/spc1 and wis1/spc2/sty2. This chain is Tyrosine-protein phosphatase 1 (pyp1), found in Schizosaccharomyces pombe (strain 972 / ATCC 24843) (Fission yeast).